Consider the following 263-residue polypeptide: Linear gramicidin dehydrogenase LgrE (263 aa).

Ser96 is a catalytic residue.

Belongs to the thioesterase family.

Functionally, in the final step of gramicidin biosynthesis, reduces the pentadecapeptide-aldehyde intermediate, that is released from the terminal module of the non-ribosomal peptide synthetase LgrD, to the final product ethanolamine-containing gramicidin. The chain is Linear gramicidin dehydrogenase LgrE (lgrE) from Brevibacillus parabrevis.